Reading from the N-terminus, the 269-residue chain is Putative phosphatase M6_Spy0533 (269 aa).

The active-site Nucleophile is D9. Residue D9 participates in Mg(2+) binding. Position 10 (I10) interacts with phosphate. D11 contacts Mg(2+). Phosphate is bound by residues 43-44 (TG) and K196. Position 219 (D219) interacts with Mg(2+). N222 serves as a coordination point for phosphate.

It depends on Mg(2+) as a cofactor.

The chain is Putative phosphatase M6_Spy0533 from Streptococcus pyogenes serotype M6 (strain ATCC BAA-946 / MGAS10394).